Reading from the N-terminus, the 270-residue chain is Elongation factor Ts (270 aa).

Residues T81–V84 form an involved in Mg(2+) ion dislocation from EF-Tu region.

This sequence belongs to the EF-Ts family.

It localises to the cytoplasm. Functionally, associates with the EF-Tu.GDP complex and induces the exchange of GDP to GTP. It remains bound to the aminoacyl-tRNA.EF-Tu.GTP complex up to the GTP hydrolysis stage on the ribosome. The sequence is that of Elongation factor Ts from Wigglesworthia glossinidia brevipalpis.